Reading from the N-terminus, the 711-residue chain is Probable cadmium-transporting ATPase (711 aa).

Residues 3–66 (EKTVYRVDGL…AGAFEHLKII (64 aa)) form the HMA domain. Positions 14 and 17 each coordinate Cd(2+). The next 5 membrane-spanning stretches (helical) occupy residues 89–109 (WRLLLSGLFIAVGYASQIMNG), 111–131 (DFYLTNALFIFAIFIGGYSLF), 151–171 (IAIIGAAFIGEWAEGSIVVIL), 317–337 (TPAIIVIAALIATVPPLLFGG), and 347–367 (LSVLVVGCPCALVVSTPVAIV). Residue aspartate 398 is the 4-aspartylphosphate intermediate of the active site. A helical membrane pass occupies residues 669 to 689 (VIKLIALLLVIPGWLTLWIAI).

This sequence belongs to the cation transport ATPase (P-type) (TC 3.A.3) family. Type IB subfamily.

It is found in the cell membrane. It catalyses the reaction Cd(2+)(in) + ATP + H2O = Cd(2+)(out) + ADP + phosphate + H(+). Its function is as follows. Couples the hydrolysis of ATP with the export of cadmium. The protein is Probable cadmium-transporting ATPase (cadA) of Listeria monocytogenes.